The primary structure comprises 153 residues: Coiled-coil-helix-coiled-coil-helix domain-containing protein 2 (153 aa).

Disordered stretches follow at residues 1 to 51 and 78 to 106; these read MPRG…AAPR and HAIT…QGAQ. Residues 14–51 are compositionally biased toward low complexity; it reads PPASRAPQMRAAPRRAPAAQPPAAAAPSAVGSPAAAPR. The region spanning 113–153 is the CHCH domain; sequence FGPCSLEIKQFLECAQNQSDVKLCEGFNEVLRQCRIANGLM. Short sequence motifs (cx9C motif) lie at residues 116-126 and 136-146; these read CSLEIKQFLEC and CEGFNEVLRQC. Disulfide bonds link C116–C146 and C126–C136.

Interacts with RBPJ.

It localises to the nucleus. Its subcellular location is the mitochondrion. The protein resides in the mitochondrion intermembrane space. Transcription factor. Binds to the oxygen responsive element of COX4I2 and activates its transcription under hypoxia conditions (4% oxygen), as well as normoxia conditions (20% oxygen). The protein is Coiled-coil-helix-coiled-coil-helix domain-containing protein 2 (Chchd2) of Mus musculus (Mouse).